Consider the following 145-residue polypeptide: Ribosomal RNA large subunit methyltransferase H (145 aa).

S-adenosyl-L-methionine contacts are provided by residues glycine 94 and 113–118 (LSPLTF).

It belongs to the RNA methyltransferase RlmH family. In terms of assembly, homodimer.

The protein resides in the cytoplasm. The catalysed reaction is pseudouridine(1915) in 23S rRNA + S-adenosyl-L-methionine = N(3)-methylpseudouridine(1915) in 23S rRNA + S-adenosyl-L-homocysteine + H(+). In terms of biological role, specifically methylates the pseudouridine at position 1915 (m3Psi1915) in 23S rRNA. The chain is Ribosomal RNA large subunit methyltransferase H from Sorangium cellulosum (strain So ce56) (Polyangium cellulosum (strain So ce56)).